A 505-amino-acid chain; its full sequence is GMP synthase [glutamine-hydrolyzing] (505 aa).

Residues 2–190 (SVVILDFGSQ…FLEICGVARD (189 aa)) form the Glutamine amidotransferase type-1 domain. Catalysis depends on C79, which acts as the Nucleophile. Catalysis depends on residues H165 and E167. One can recognise a GMPS ATP-PPase domain in the interval 191 to 380 (WNAEHIVDEL…LGLPDAIRMR (190 aa)). 218–224 (SGGVDSS) provides a ligand contact to ATP.

As to quaternary structure, homodimer.

The catalysed reaction is XMP + L-glutamine + ATP + H2O = GMP + L-glutamate + AMP + diphosphate + 2 H(+). The protein operates within purine metabolism; GMP biosynthesis; GMP from XMP (L-Gln route): step 1/1. Functionally, catalyzes the synthesis of GMP from XMP. The chain is GMP synthase [glutamine-hydrolyzing] from Deinococcus geothermalis (strain DSM 11300 / CIP 105573 / AG-3a).